A 385-amino-acid chain; its full sequence is 1-deoxy-D-xylulose 5-phosphate reductoisomerase (385 aa).

NADPH contacts are provided by T11, G12, S13, I14, N39, and N123. Position 124 (K124) interacts with 1-deoxy-D-xylulose 5-phosphate. E125 is a binding site for NADPH. D149 contacts Mn(2+). 1-deoxy-D-xylulose 5-phosphate-binding residues include S150, E151, S174, and H197. E151 lines the Mn(2+) pocket. G203 serves as a coordination point for NADPH. 1-deoxy-D-xylulose 5-phosphate contacts are provided by S210, N215, K216, and E219. E219 is a Mn(2+) binding site.

The protein belongs to the DXR family. Requires Mg(2+) as cofactor. The cofactor is Mn(2+).

It catalyses the reaction 2-C-methyl-D-erythritol 4-phosphate + NADP(+) = 1-deoxy-D-xylulose 5-phosphate + NADPH + H(+). It functions in the pathway isoprenoid biosynthesis; isopentenyl diphosphate biosynthesis via DXP pathway; isopentenyl diphosphate from 1-deoxy-D-xylulose 5-phosphate: step 1/6. Functionally, catalyzes the NADPH-dependent rearrangement and reduction of 1-deoxy-D-xylulose-5-phosphate (DXP) to 2-C-methyl-D-erythritol 4-phosphate (MEP). The chain is 1-deoxy-D-xylulose 5-phosphate reductoisomerase from Porphyromonas gingivalis (strain ATCC 33277 / DSM 20709 / CIP 103683 / JCM 12257 / NCTC 11834 / 2561).